A 315-amino-acid polypeptide reads, in one-letter code: tRNA dimethylallyltransferase (315 aa).

10–17 is a binding site for ATP; the sequence is GPTASGKS. 12-17 provides a ligand contact to substrate; sequence TASGKS. The interval 35–38 is interaction with substrate tRNA; it reads DSMQ.

This sequence belongs to the IPP transferase family. In terms of assembly, monomer. The cofactor is Mg(2+).

It catalyses the reaction adenosine(37) in tRNA + dimethylallyl diphosphate = N(6)-dimethylallyladenosine(37) in tRNA + diphosphate. In terms of biological role, catalyzes the transfer of a dimethylallyl group onto the adenine at position 37 in tRNAs that read codons beginning with uridine, leading to the formation of N6-(dimethylallyl)adenosine (i(6)A). This is tRNA dimethylallyltransferase from Thermoanaerobacter pseudethanolicus (strain ATCC 33223 / 39E) (Clostridium thermohydrosulfuricum).